Here is a 356-residue protein sequence, read N- to C-terminus: tRNA N6-adenosine threonylcarbamoyltransferase (356 aa).

Fe cation contacts are provided by histidine 115 and histidine 119. Residues 138–142 (LVSGG), aspartate 171, glycine 184, and asparagine 283 each bind substrate. Aspartate 311 contributes to the Fe cation binding site.

This sequence belongs to the KAE1 / TsaD family. Requires Fe(2+) as cofactor.

The protein localises to the cytoplasm. It catalyses the reaction L-threonylcarbamoyladenylate + adenosine(37) in tRNA = N(6)-L-threonylcarbamoyladenosine(37) in tRNA + AMP + H(+). Required for the formation of a threonylcarbamoyl group on adenosine at position 37 (t(6)A37) in tRNAs that read codons beginning with adenine. Is involved in the transfer of the threonylcarbamoyl moiety of threonylcarbamoyl-AMP (TC-AMP) to the N6 group of A37, together with TsaE and TsaB. TsaD likely plays a direct catalytic role in this reaction. This chain is tRNA N6-adenosine threonylcarbamoyltransferase, found in Prochlorococcus marinus (strain SARG / CCMP1375 / SS120).